The chain runs to 366 residues: Phospho-N-acetylmuramoyl-pentapeptide-transferase (366 aa).

Transmembrane regions (helical) follow at residues 27–47, 76–96, 101–121, 136–156, 176–196, 205–225, 241–261, 264–284, 285–305, and 343–363; these read GAAI…ISLL, PTMG…IWVI, FFWL…WDDF, IKLL…LADP, IDIG…SSNA, GLAA…SYIS, GAGE…GFLW, CYPA…SALG, VVAI…IFVI, and AVTV…LSSL.

The protein belongs to the glycosyltransferase 4 family. MraY subfamily. Requires Mg(2+) as cofactor.

It is found in the cell inner membrane. The enzyme catalyses UDP-N-acetyl-alpha-D-muramoyl-L-alanyl-gamma-D-glutamyl-meso-2,6-diaminopimeloyl-D-alanyl-D-alanine + di-trans,octa-cis-undecaprenyl phosphate = di-trans,octa-cis-undecaprenyl diphospho-N-acetyl-alpha-D-muramoyl-L-alanyl-D-glutamyl-meso-2,6-diaminopimeloyl-D-alanyl-D-alanine + UMP. It functions in the pathway cell wall biogenesis; peptidoglycan biosynthesis. In terms of biological role, catalyzes the initial step of the lipid cycle reactions in the biosynthesis of the cell wall peptidoglycan: transfers peptidoglycan precursor phospho-MurNAc-pentapeptide from UDP-MurNAc-pentapeptide onto the lipid carrier undecaprenyl phosphate, yielding undecaprenyl-pyrophosphoryl-MurNAc-pentapeptide, known as lipid I. The protein is Phospho-N-acetylmuramoyl-pentapeptide-transferase of Methylacidiphilum infernorum (isolate V4) (Methylokorus infernorum (strain V4)).